A 631-amino-acid chain; its full sequence is Phosphomethylpyrimidine synthase (631 aa).

Substrate is bound by residues Asn239, Met268, Tyr297, His333, 353–355, 394–397, and Glu433; these read SRG and DGLR. Position 437 (His437) interacts with Zn(2+). A substrate-binding site is contributed by Tyr460. Zn(2+) is bound at residue His501. Residues Cys581, Cys584, and Cys589 each contribute to the [4Fe-4S] cluster site.

This sequence belongs to the ThiC family. As to quaternary structure, homodimer. [4Fe-4S] cluster serves as cofactor.

The enzyme catalyses 5-amino-1-(5-phospho-beta-D-ribosyl)imidazole + S-adenosyl-L-methionine = 4-amino-2-methyl-5-(phosphooxymethyl)pyrimidine + CO + 5'-deoxyadenosine + formate + L-methionine + 3 H(+). It participates in cofactor biosynthesis; thiamine diphosphate biosynthesis. In terms of biological role, catalyzes the synthesis of the hydroxymethylpyrimidine phosphate (HMP-P) moiety of thiamine from aminoimidazole ribotide (AIR) in a radical S-adenosyl-L-methionine (SAM)-dependent reaction. The polypeptide is Phosphomethylpyrimidine synthase (Escherichia coli O45:K1 (strain S88 / ExPEC)).